Reading from the N-terminus, the 477-residue chain is Phosphatidylinositol 4-kinase type 2-beta (477 aa).

The disordered stretch occupies residues 1 to 80 (MPEPPRDIMA…EDRSISASLS (80 aa)). A Phosphoserine modification is found at serine 45. The 332-residue stretch at 116–447 (GVFPERISQG…AQMPCVIVEC (332 aa)) folds into the PI3K/PI4K catalytic domain. A G-loop region spans residues 122–128 (ISQGSSG). The ATP site is built by serine 129 and lysine 144. The segment at 149-151 (EPY) is important for substrate binding. An important for interaction with membranes region spans residues 157–170 (KWTKYVHKVCCPCC). ATP contacts are provided by residues 253–256 (QLFV) and 267–268 (RR). Residues 260-268 (KEAEYWLRR) are important for interaction with membranes. Residues 297–305 (RNTDRGNDN) are catalytic loop. The activation loop stretch occupies residues 338-358 (AIDNGLAFPFKHPDEWRAYPF). Aspartate 340 is a binding site for ATP. Residues 353–362 (WRAYPFHWAW) form an important for interaction with membranes region.

The protein belongs to the PI3/PI4-kinase family. Type II PI4K subfamily.

It localises to the cytoplasm. The protein localises to the cytosol. It is found in the golgi apparatus membrane. The protein resides in the endoplasmic reticulum membrane. Its subcellular location is the cell membrane. It localises to the early endosome membrane. It carries out the reaction a 1,2-diacyl-sn-glycero-3-phospho-(1D-myo-inositol) + ATP = a 1,2-diacyl-sn-glycero-3-phospho-(1D-myo-inositol 4-phosphate) + ADP + H(+). Functionally, together with PI4K2A and the type III PI4Ks (PIK4CA and PIK4CB) it contributes to the overall PI4-kinase activity of the cell. This contribution may be especially significant in plasma membrane, endosomal and Golgi compartments. The phosphorylation of phosphatidylinositol (PI) to PI4P is the first committed step in the generation of phosphatidylinositol 4,5-bisphosphate (PIP2), a precursor of the second messenger inositol 1,4,5-trisphosphate (InsP3). Contributes to the production of InsP3 in stimulated cells and is likely to be involved in the regulation of vesicular trafficking. The protein is Phosphatidylinositol 4-kinase type 2-beta (Pi4k2b) of Rattus norvegicus (Rat).